We begin with the raw amino-acid sequence, 257 residues long: Transcription factor GHD7 (257 aa).

At S68 the chain carries Phosphoserine; by CK1. The 43-residue stretch at 190–232 folds into the CCT domain; sequence REAKLMRYKEKRKKRCYEKQIRYASRKAYAEMRPRVRGRFAKE. The short motif at 198–204 is the Nuclear localization signal element; sequence KEKRKKR. A disordered region spans residues 226-245; that stretch reads RGRFAKEPDQEAVAPPSTYV.

Interacts with HD16/EL1. Post-translationally, phosphorylated at Ser-68 by HD16/EL1, a casein kinase 1. As to expression, expressed in the apical meristem, developing leaves, leaf sheaths of young seedling, root meristem, epidermal layer of developing stems and branch-primordia of developing panicles.

It localises to the nucleus. Its function is as follows. Probable transcription factor involved in the regulation of flowering time under long day (LD) conditions. Plays a major role as repressor of flowering. Controls flowering time by negatively regulating the expression of EHD1 and HD3A. The protein is Transcription factor GHD7 of Oryza sativa subsp. japonica (Rice).